Consider the following 266-residue polypeptide: Type III pantothenate kinase (266 aa).

Residue 11–18 coordinates ATP; sequence DIGNTSTV. Residue 111–114 participates in substrate binding; the sequence is GADR. Aspartate 113 (proton acceptor) is an active-site residue. Aspartate 135 contributes to the K(+) binding site. Residue threonine 138 participates in ATP binding. Residue threonine 190 participates in substrate binding.

It belongs to the type III pantothenate kinase family. As to quaternary structure, homodimer. The cofactor is NH4(+). Requires K(+) as cofactor.

The protein localises to the cytoplasm. The enzyme catalyses (R)-pantothenate + ATP = (R)-4'-phosphopantothenate + ADP + H(+). Its pathway is cofactor biosynthesis; coenzyme A biosynthesis; CoA from (R)-pantothenate: step 1/5. Catalyzes the phosphorylation of pantothenate (Pan), the first step in CoA biosynthesis. This Deinococcus geothermalis (strain DSM 11300 / CIP 105573 / AG-3a) protein is Type III pantothenate kinase.